Reading from the N-terminus, the 497-residue chain is MTVKKADVLLVGGGVMSTTLGTMLMQLDPSLNIVMVERLDHVAHESTYGWNNAGTGHAGYCELNYTPETGDGDIEITRALAINASFEVSLQFWSYLVERGGLPSPDEFINTCPHESFVWGESDIAFLRKRHQLLSAHHLFKDMEFSDDPRTLQDWMPLVMEHRDPMQKVAATRVRYGSDVDFGSLTRNMVEHLQKNANFELLLSHPVKSLKQTSDGRWNVQLSDSRNGGSKTIDAGFVFLGAGGGALPLLQKSGIAEGDGYGGFPVSGQWLVCKKPDIVKRHYAKVYGKAAIGAPPMSVPHLDTRIINGEPALLFGPYAGFTTKFLKTGSSFDLFGSIRANNFGPIMSVGINNMDLTRYLIKEAMQSHSDRVKSLLNYFPEAKEDDWTLAEAGQRVQIIKRDAQGRGKLEFGTELVASKDGTLAALLGASPGASVAVKAMVDVIERCFKDRLSSADWTAKLKEMIPSYGESLVDNAELLHSVRSRTLSVLGLDKKRL.

The protein belongs to the MQO family. It depends on FAD as a cofactor.

It catalyses the reaction (S)-malate + a quinone = a quinol + oxaloacetate. Its pathway is carbohydrate metabolism; tricarboxylic acid cycle; oxaloacetate from (S)-malate (quinone route): step 1/1. The chain is Probable malate:quinone oxidoreductase from Hahella chejuensis (strain KCTC 2396).